Here is a 38-residue protein sequence, read N- to C-terminus: Toxin Bcg III 31.16 (38 aa).

3 disulfide bridges follow: C4–C37, C6–C30, and C20–C38.

This sequence belongs to the sea anemone type 3 (BDS) potassium channel toxin family.

The protein resides in the secreted. It is found in the nematocyst. Possible modulator of crustacean voltage-gated sodium channels (Nav). The sequence is that of Toxin Bcg III 31.16 from Bunodosoma cangicum (Sea anemone).